The sequence spans 601 residues: Amino-acid acetyltransferase, mitochondrial (601 aa).

The 158-residue stretch at 401–558 (FTMDNLIASK…KKKQNNKKKK (158 aa)) folds into the N-acetyltransferase domain.

It belongs to the acetyltransferase family.

The protein localises to the mitochondrion. The catalysed reaction is L-glutamate + acetyl-CoA = N-acetyl-L-glutamate + CoA + H(+). Its pathway is amino-acid biosynthesis; L-arginine biosynthesis; N(2)-acetyl-L-ornithine from L-glutamate: step 1/4. In terms of biological role, N-acetylglutamate synthase involved in arginine biosynthesis. This chain is Amino-acid acetyltransferase, mitochondrial (ARG2), found in Lodderomyces elongisporus (strain ATCC 11503 / CBS 2605 / JCM 1781 / NBRC 1676 / NRRL YB-4239) (Yeast).